The sequence spans 358 residues: Peptide chain release factor 1 (358 aa).

An N5-methylglutamine modification is found at Q237.

It belongs to the prokaryotic/mitochondrial release factor family. Post-translationally, methylated by PrmC. Methylation increases the termination efficiency of RF1.

Its subcellular location is the cytoplasm. In terms of biological role, peptide chain release factor 1 directs the termination of translation in response to the peptide chain termination codons UAG and UAA. The polypeptide is Peptide chain release factor 1 (Streptomyces coelicolor (strain ATCC BAA-471 / A3(2) / M145)).